The chain runs to 293 residues: tRNA pseudouridine synthase B (293 aa).

Aspartate 38 functions as the Nucleophile in the catalytic mechanism.

This sequence belongs to the pseudouridine synthase TruB family. Type 1 subfamily.

It carries out the reaction uridine(55) in tRNA = pseudouridine(55) in tRNA. Its function is as follows. Responsible for synthesis of pseudouridine from uracil-55 in the psi GC loop of transfer RNAs. This chain is tRNA pseudouridine synthase B, found in Solibacter usitatus (strain Ellin6076).